The chain runs to 629 residues: Natural resistance-associated macrophage protein 2 homolog (629 aa).

At 1-151 the chain is on the cytoplasmic side; it reads MNNNNNNKKL…KSKFSIKKLK (151 aa). Residues 50-119 form a disordered region; the sequence is NVVNGSIEDS…SDIDSSGDSI (70 aa). The segment covering 62 to 85 has biased composition (low complexity); sequence QQQQQQQQQQQQQQQQQQQQQQQQ. A compositionally biased stretch (basic and acidic residues) spans 96–105; the sequence is DKPFQDRDSN. Residues 106–118 show a composition bias toward low complexity; the sequence is IGDGSDIDSSGDS. Residues 152-172 form a helical membrane-spanning segment; sequence SFLGPALFISVGYMDPGNWAT. The Extracellular segment spans residues 173-182; that stretch reads DLEGGSRFGY. A helical transmembrane segment spans residues 183-203; it reads QLMWVLLFSNIMALFLQTLVI. Over 204–224 the chain is Cytoplasmic; that stretch reads KLALVTKNDLAQQCRKEYSKT. A helical transmembrane segment spans residues 225 to 245; it reads VNIFLWLILELAIISTDLAEV. The Extracellular segment spans residues 246–253; that stretch reads IGTAIGLN. Residues 254–274 form a helical membrane-spanning segment; the sequence is ILFGLPLIAGVAITSLDTLLF. The Cytoplasmic segment spans residues 275–286; sequence LAIQRWGIRKLE. A helical transmembrane segment spans residues 287–307; that stretch reads LLILLLLSMITMCFVIELFLS. Residues 308–326 lie on the Extracellular side of the membrane; that stretch reads KPIASEVFSGFVPRLNSDS. Residues 327 to 347 form a helical membrane-spanning segment; sequence VMVATGIVGATTMPHNLFLHG. The Cytoplasmic portion of the chain corresponds to 348-376; sequence SVVKSRKIPNDRRKSVIKQAYRYNVIDTV. A helical transmembrane segment spans residues 377–397; that stretch reads LALNCAFFVNIAILMLAASVF. Residues 398–421 lie on the Extracellular side of the membrane; sequence WKSNIQVTELSEAYRLLTKLMDGK. Residues 422–442 traverse the membrane as a helical segment; the sequence is LAAVLFGLGLFLAGQSSTITG. Over 443–468 the chain is Cytoplasmic; that stretch reads TMAGQIVMEGFIKLRIKPWLRRFITR. Residues 469–489 traverse the membrane as a helical segment; the sequence is LLAIIPAAIVIIVLGDKGTYT. The Extracellular segment spans residues 490–491; it reads LL. The chain crosses the membrane as a helical span at residues 492–512; that stretch reads IISQVLLSIGLPFAVVPLIIF. The Cytoplasmic segment spans residues 513-527; the sequence is TSSYEIMGEFKNRLS. The helical transmembrane segment at 528-548 threads the bilayer; it reads IIIINSIIALFIIGLNLATIF. The Extracellular segment spans residues 549–565; the sequence is QLINDFLHNDSIISKCL. The N-linked (GlcNAc...) asparagine glycan is linked to asparagine 557. The helical transmembrane segment at 566 to 586 threads the bilayer; sequence TIIFLIPLSIALCCLLLWLII. Residues 587-629 lie on the Cytoplasmic side of the membrane; the sequence is SKINFFTNLLSKIFNNNNNNNNKNIINNNNNYSGNTINNQTIQ.

This sequence belongs to the NRAMP family.

The protein localises to the cell membrane. In terms of biological role, divalent transition metal (iron and manganese) transporter. The sequence is that of Natural resistance-associated macrophage protein 2 homolog (nramp2) from Dictyostelium discoideum (Social amoeba).